The following is a 139-amino-acid chain: Ribulose bisphosphate carboxylase small subunit (139 aa).

The protein belongs to the RuBisCO small chain family. In terms of assembly, heterohexadecamer of 8 large and 8 small subunits.

The protein localises to the plastid. The protein resides in the chloroplast. RuBisCO catalyzes two reactions: the carboxylation of D-ribulose 1,5-bisphosphate, the primary event in carbon dioxide fixation, as well as the oxidative fragmentation of the pentose substrate in the photorespiration process. Both reactions occur simultaneously and in competition at the same active site. Although the small subunit is not catalytic it is essential for maximal activity. This is Ribulose bisphosphate carboxylase small subunit from Thalassiosira nordenskioeldii (Marine diatom).